The chain runs to 601 residues: Replication protein A 70 kDa DNA-binding subunit (601 aa).

Positions 107–172 are disordered; that stretch reads MPGKIGDPTP…NTPGGSSKVV (66 aa). A compositionally biased stretch (low complexity) spans 124 to 135; it reads APSTAPAPTARP. Over residues 137–153 the composition is skewed to polar residues; that stretch reads QPQNGSDGSTYRPSAQS. A DNA-binding region (OB) is located at residues 184–268; that stretch reads WTIRARVTNK…LKNDYEMTLN (85 aa). Phosphoserine is present on serine 370. The C4-type zinc finger occupies 466 to 488; that stretch reads CPSKDCNKKVVDQQNGMFRCEKC.

Belongs to the replication factor A protein 1 family. In terms of assembly, component of the heterotrimeric canonical replication protein A complex (RPA).

The protein localises to the nucleus. The protein resides in the PML body. In terms of biological role, as part of the heterotrimeric replication protein A complex (RPA/RP-A), binds and stabilizes single-stranded DNA intermediates, that form during DNA replication or upon DNA stress. It prevents their reannealing and in parallel, recruits and activates different proteins and complexes involved in DNA metabolism. Thereby, it plays an essential role both in DNA replication and the cellular response to DNA damage. The chain is Replication protein A 70 kDa DNA-binding subunit (rpa1) from Danio rerio (Zebrafish).